A 339-amino-acid chain; its full sequence is MLEQLPYLALKTPPKTTALLKAECADFIVKEHLGYEMSGDGEFVALYVRKTDCNTLFVGEKLAKFAGVSERNMGYAGLKDRRAVTEQWFCLQMPGMETPDFSQFELDGVEILTVTRHNRKIRTGSLEGNYFDILLRGAEESDELKVRLDFVANFGFPNYFTEQRFGREGHNLTQALRWAQGEIKVKDRKKRSFYLSAARSEIFNLVVAARIAKGATNQVLPNDIVQLAGSHSWFKADEKEDLNALQVRLENQDILLTAPLIGEDILAASDIENEIVNQHSVFDPLMKQERMKAARRPLLMKAKGFSWAFELEGLRLKFYLPAGSYATALVRELVNYTEE.

Catalysis depends on D80, which acts as the Nucleophile. The region spanning 155 to 311 (GFPNYFTEQR…AKGFSWAFEL (157 aa)) is the TRUD domain.

The protein belongs to the pseudouridine synthase TruD family.

It catalyses the reaction uridine(13) in tRNA = pseudouridine(13) in tRNA. Its function is as follows. Responsible for synthesis of pseudouridine from uracil-13 in transfer RNAs. In Haemophilus influenzae (strain PittEE), this protein is tRNA pseudouridine synthase D.